A 572-amino-acid polypeptide reads, in one-letter code: Serine/threonine-protein kinase pak-1 (572 aa).

Disordered regions lie at residues 1 to 71 (MKAF…SRPS) and 156 to 195 (QPYS…QGVP). The CRIB domain maps to 67–80 (ISRPSNFEHTIHVG). The tract at residues 81–294 (YDPKTGEFTG…IVSIGNPDRK (214 aa)) is linker. Residues 178–195 (PMTTSTSSAGYNSKQGVP) are compositionally biased toward polar residues. The 252-residue stretch at 295-546 (YRKVDKIGSG…ASQLLTHPFL (252 aa)) folds into the Protein kinase domain. ATP-binding positions include 301–309 (IGSGASGSV) and lysine 324. Aspartate 414 serves as the catalytic Proton acceptor.

This sequence belongs to the protein kinase superfamily. STE Ser/Thr protein kinase family. STE20 subfamily. In terms of assembly, interacts with cdc-42 (GTP-bound form) and cedd-10 (GTP-bound form). Mg(2+) is required as a cofactor. Requires Mn(2+) as cofactor. As to expression, specifically colocalized with cdc-42 and ced-10 at all hypodermal cell boundaries during embryo elongation throughout the second phase of embryogenesis. Expressed mainly in pharyngeal muscles, the CAN neurons, motor neurons in the ventral nerve cord, several cells in the tail region (including the B and Y cells from L1 to adult, the hypodermal blast cell T in the L1 and some of its progeny in later stages), and the distal tip cells.

It is found in the cell membrane. The protein localises to the cytoplasm. It localises to the cell projection. Its subcellular location is the axon. The protein resides in the perikaryon. It catalyses the reaction L-seryl-[protein] + ATP = O-phospho-L-seryl-[protein] + ADP + H(+). The catalysed reaction is L-threonyl-[protein] + ATP = O-phospho-L-threonyl-[protein] + ADP + H(+). In terms of biological role, required for hypodermal cell fusion, together with cdc-42 and ced-10, leading to embryonic body elongation, which involves dramatic cytoskeletal reorganization. Plays a redundant role with max-2 in dorsal axonal guidance in ventral cord commissural motoneurons and in P neuroblast migration. Acts probably downstream of Rho GTPases mig-2 and ced-10 to regulate these 2 processes. Involved in orientating axonal growth of HSN neurons. During gonad morphogenesis and probably in association with pix-1 and git-1, involved in the migration of distal tip cell (DTC) and in maintaining their sharp tapering morphology. In addition, plays a redundant role with max-2 in DTC-mediated guidance of gonad elongation. May phosphorylate mlc-4. This chain is Serine/threonine-protein kinase pak-1 (pak-1), found in Caenorhabditis elegans.